Consider the following 500-residue polypeptide: Aspartyl/glutamyl-tRNA(Asn/Gln) amidotransferase subunit B (500 aa).

Belongs to the GatB/GatE family. GatB subfamily. As to quaternary structure, heterotrimer of A, B and C subunits.

It catalyses the reaction L-glutamyl-tRNA(Gln) + L-glutamine + ATP + H2O = L-glutaminyl-tRNA(Gln) + L-glutamate + ADP + phosphate + H(+). It carries out the reaction L-aspartyl-tRNA(Asn) + L-glutamine + ATP + H2O = L-asparaginyl-tRNA(Asn) + L-glutamate + ADP + phosphate + 2 H(+). In terms of biological role, allows the formation of correctly charged Asn-tRNA(Asn) or Gln-tRNA(Gln) through the transamidation of misacylated Asp-tRNA(Asn) or Glu-tRNA(Gln) in organisms which lack either or both of asparaginyl-tRNA or glutaminyl-tRNA synthetases. The reaction takes place in the presence of glutamine and ATP through an activated phospho-Asp-tRNA(Asn) or phospho-Glu-tRNA(Gln). This chain is Aspartyl/glutamyl-tRNA(Asn/Gln) amidotransferase subunit B, found in Sinorhizobium medicae (strain WSM419) (Ensifer medicae).